Reading from the N-terminus, the 535-residue chain is Bifunctional purine biosynthesis protein PurH (535 aa).

In terms of domain architecture, MGS-like spans 6 to 151; sequence TRLPIRRALI…KNHKDVAIVV (146 aa).

This sequence belongs to the PurH family.

The enzyme catalyses (6R)-10-formyltetrahydrofolate + 5-amino-1-(5-phospho-beta-D-ribosyl)imidazole-4-carboxamide = 5-formamido-1-(5-phospho-D-ribosyl)imidazole-4-carboxamide + (6S)-5,6,7,8-tetrahydrofolate. It catalyses the reaction IMP + H2O = 5-formamido-1-(5-phospho-D-ribosyl)imidazole-4-carboxamide. The protein operates within purine metabolism; IMP biosynthesis via de novo pathway; 5-formamido-1-(5-phospho-D-ribosyl)imidazole-4-carboxamide from 5-amino-1-(5-phospho-D-ribosyl)imidazole-4-carboxamide (10-formyl THF route): step 1/1. It functions in the pathway purine metabolism; IMP biosynthesis via de novo pathway; IMP from 5-formamido-1-(5-phospho-D-ribosyl)imidazole-4-carboxamide: step 1/1. This is Bifunctional purine biosynthesis protein PurH from Pseudomonas entomophila (strain L48).